Consider the following 515-residue polypeptide: Putative myristoylated protein 118L (515 aa).

Glycine 2 carries N-myristoyl glycine; by host lipidation. 3 helical membrane-spanning segments follow: residues 188–208, 214–234, and 482–502; these read LSLA…VGGV, IIFP…FQWT, and WLLY…AFSS.

This sequence belongs to the IIV-6 118L/458R family.

It localises to the membrane. This Acheta domesticus (House cricket) protein is Putative myristoylated protein 118L.